Reading from the N-terminus, the 357-residue chain is MKKYLLLALLPFLYACSNSSNQGINYDEAFAKDTQGLDILTGQFSHNIDRIWGVNELLVASRKDYVKYTDSFYTRSHVSFDEGNIVIETQQDLNRLHNAIVHTLLMGADAKGIDLFASGDVPISSRPFLLGQVVDHQGQQIANQVIASNFATYLIQNKLQTRRLQNGHTVQFVSVPMIANHVEVRARKYLPLIRKAAQRYGIDESLILGIMQTESSFNPYAISYANAIGLMQVVPHTAGRDVFAMKGKGGQPSTRYLYDPANNIDAGVSYLWILQNQYLDGITNPTSKRFAMISAYNSGAGAVLRVFDNDKDTAIYKINQMYPEQVYRILTTVHPSSQARNYLLKVDKAQKKFRVRR.

Positions 1–15 (MKKYLLLALLPFLYA) are cleaved as a signal peptide. The N-palmitoyl cysteine moiety is linked to residue Cys-16. Cys-16 carries S-diacylglycerol cysteine lipidation.

It belongs to the transglycosylase Slt family.

The protein resides in the cell outer membrane. The catalysed reaction is Exolytic cleavage of the (1-&gt;4)-beta-glycosidic linkage between N-acetylmuramic acid (MurNAc) and N-acetylglucosamine (GlcNAc) residues in peptidoglycan, from either the reducing or the non-reducing ends of the peptidoglycan chains, with concomitant formation of a 1,6-anhydrobond in the MurNAc residue.. Functionally, murein-degrading enzyme. May play a role in recycling of muropeptides during cell elongation and/or cell division. The protein is Membrane-bound lytic murein transglycosylase C of Haemophilus influenzae (strain PittGG).